The primary structure comprises 355 residues: F-box only protein 32 (355 aa).

The Nuclear localization signal motif lies at 62-67 (KKRKKD). Positions 169–173 (LLQTL) match the Nuclear export signal motif. The 49-residue stretch at 223-271 (LTFTDLPLCLQLNIMQRLSDGRDLVSLGQVAPDLHVLSEDRLLWKKLCQ) folds into the F-box domain. The Bipartite nuclear localization signal signature appears at 280–295 (RKRLILSDKGQLDWKK).

In terms of assembly, part of the SCF (SKP1-CUL1-F-box) E3 ubiquitin-protein ligase complex SCF(FBXO32) formed of CUL1, SKP1, RBX1 and FBXO32.

The protein localises to the cytoplasm. It localises to the nucleus. It participates in protein modification; protein ubiquitination. In terms of biological role, substrate recognition component of a SCF (SKP1-CUL1-F-box protein) E3 ubiquitin-protein ligase complex which mediates the ubiquitination and subsequent proteasomal degradation of target proteins. Probably recognizes and binds to phosphorylated target proteins during skeletal muscle atrophy. Recognizes TERF1. The protein is F-box only protein 32 (FBXO32) of Sus scrofa (Pig).